A 61-amino-acid polypeptide reads, in one-letter code: Small ribosomal subunit protein uS14 (61 aa).

Zn(2+) contacts are provided by Cys-24, Cys-27, Cys-40, and Cys-43.

This sequence belongs to the universal ribosomal protein uS14 family. Zinc-binding uS14 subfamily. As to quaternary structure, part of the 30S ribosomal subunit. Contacts proteins S3 and S10. It depends on Zn(2+) as a cofactor.

In terms of biological role, binds 16S rRNA, required for the assembly of 30S particles and may also be responsible for determining the conformation of the 16S rRNA at the A site. The chain is Small ribosomal subunit protein uS14 from Campylobacter fetus subsp. fetus (strain 82-40).